Here is a 736-residue protein sequence, read N- to C-terminus: Catalase-peroxidase 2 (736 aa).

The first 23 residues, 1-23 (MIKKTLPVLILLALSGSFSTAVA), serve as a signal peptide directing secretion. A cross-link (tryptophyl-tyrosyl-methioninium (Trp-Tyr) (with M-249)) is located at residues 102 to 223 (WHGAGTYRTY…LAATQMGLIY (122 aa)). Catalysis depends on His103, which acts as the Proton acceptor. The segment at residues 223-249 (YVNPEGPGGKPDPLASAKDIREAFSRM) is a cross-link (tryptophyl-tyrosyl-methioninium (Tyr-Met) (with W-102)). His264 provides a ligand contact to heme b.

It belongs to the peroxidase family. Peroxidase/catalase subfamily. As to quaternary structure, homodimer or homotetramer. The cofactor is heme b. In terms of processing, formation of the three residue Trp-Tyr-Met cross-link is important for the catalase, but not the peroxidase activity of the enzyme.

Its subcellular location is the periplasm. It catalyses the reaction H2O2 + AH2 = A + 2 H2O. The enzyme catalyses 2 H2O2 = O2 + 2 H2O. Functionally, bifunctional enzyme with both catalase and broad-spectrum peroxidase activity. The sequence is that of Catalase-peroxidase 2 from Escherichia coli O157:H7.